We begin with the raw amino-acid sequence, 320 residues long: Cytochrome f (320 aa).

The signal sequence occupies residues 1–35; that stretch reads MQTRNTFSWIREEITRSISVLLMIYIITWASISSA. The heme site is built by Y36, C56, C59, and H60. The chain crosses the membrane as a helical span at residues 286–306; it reads VQGLLFFLGSVVLAQIFLVLK.

It belongs to the cytochrome f family. In terms of assembly, the 4 large subunits of the cytochrome b6-f complex are cytochrome b6, subunit IV (17 kDa polypeptide, petD), cytochrome f and the Rieske protein, while the 4 small subunits are PetG, PetL, PetM and PetN. The complex functions as a dimer. Heme serves as cofactor.

The protein localises to the plastid. The protein resides in the chloroplast thylakoid membrane. Functionally, component of the cytochrome b6-f complex, which mediates electron transfer between photosystem II (PSII) and photosystem I (PSI), cyclic electron flow around PSI, and state transitions. This chain is Cytochrome f, found in Lobularia maritima (Sweet alyssum).